The sequence spans 692 residues: Peroxisomal primary amine oxidase (692 aa).

Residues 1-22 are compositionally biased toward low complexity; sequence MERLRQIASQATAASAAPARPA. The tract at residues 1-26 is disordered; it reads MERLRQIASQATAASAAPARPAHPLD. N-linked (GlcNAc...) asparagine glycosylation is present at Asn243. 317-328 is a substrate binding site; the sequence is ALDIGEYGAGYM. Residue Asp319 is the Proton acceptor of the active site. A disulfide bridge connects residues Cys338 and Cys364. Residue 402–407 coordinates substrate; that stretch reads AANYEY. Tyr405 serves as the catalytic Schiff-base intermediate with substrate; via topaquinone. Tyr405 carries the 2',4',5'-topaquinone modification. Cu cation contacts are provided by His456 and His458. Mn(2+)-binding residues include Asp465, Asp613, and Ile614. His624 is a binding site for Cu cation.

Belongs to the copper/topaquinone oxidase family. Homodimer. Requires Cu cation as cofactor. The cofactor is Zn(2+). L-topaquinone is required as a cofactor. It depends on Mn(2+) as a cofactor. Post-translationally, topaquinone (TPQ) is generated by copper-dependent autoxidation of a specific tyrosyl residue.

The protein localises to the peroxisome. It catalyses the reaction a primary methyl amine + O2 + H2O = an aldehyde + H2O2 + NH4(+). This chain is Peroxisomal primary amine oxidase (AMO), found in Pichia angusta (Yeast).